The sequence spans 381 residues: ELMO domain-containing protein 3 (381 aa).

The segment covering M1–Q17 has biased composition (basic and acidic residues). Residues M1 to K31 form a disordered region. The 155-residue stretch at M170–P324 folds into the ELMO domain.

It is found in the cell projection. The protein resides in the stereocilium. The protein localises to the kinocilium. It localises to the cytoplasm. Its subcellular location is the cytoskeleton. Functionally, acts as a GTPase-activating protein (GAP) for ARL2 with low specific activity. This chain is ELMO domain-containing protein 3 (ELMOD3), found in Bos taurus (Bovine).